The primary structure comprises 342 residues: Phosphate acyltransferase (342 aa).

This sequence belongs to the PlsX family. In terms of assembly, homodimer. Probably interacts with PlsY.

It is found in the cytoplasm. It catalyses the reaction a fatty acyl-[ACP] + phosphate = an acyl phosphate + holo-[ACP]. It participates in lipid metabolism; phospholipid metabolism. Its function is as follows. Catalyzes the reversible formation of acyl-phosphate (acyl-PO(4)) from acyl-[acyl-carrier-protein] (acyl-ACP). This enzyme utilizes acyl-ACP as fatty acyl donor, but not acyl-CoA. In Legionella pneumophila (strain Corby), this protein is Phosphate acyltransferase.